The chain runs to 525 residues: MFGSATANPPAQRDLPSSDSDSPTPDAQPPYLLEISHISKGFPGVIALNDVQLRVRPGSVLALMGENGAGKSTLMKIIAGIYQPDSGEIRLRGKPIRFETPLSALQAGIAMIHQELNLMPFMSIAENIWIGREQLNGLHMVDHREMHRCTTELLERLRIRLDPEDLVGNLSIAERQMVEIAKAVSYNSDVLIMDEPTSAITETEVAHLFSIINDLRAQGKGIIYITHKMNEVFEIADEVAVFRDGAYIGLQRAESMDGDSLITMMVGRELTQLFPEREKPPGEVLLSVSNLCLNGIFKDVSFDLRAGEILGIAGLMGSGRTNVAETLFGITPSDSGEVRFDGTTVHIADPHQAIELGFALLTEDRKLTGLFPCLSVMENMEMAVLANYAGNGFVQQKALRALCEDMCKKLRVKTPSLEQCIDTLSGGNQQKALLARWLMTNPRLLILDEPTRGIDVGAKAEIYRLISLLASEGMAVIMISSELPEVLGMSDRVMVMHEGEMMGILDRGEATQEKVMHLASGHKVH.

The disordered stretch occupies residues 1–30 (MFGSATANPPAQRDLPSSDSDSPTPDAQPP). Residues 14 to 25 (DLPSSDSDSPTP) show a composition bias toward low complexity. ABC transporter domains are found at residues 33–269 (LEIS…VGRE) and 279–523 (KPPG…SGHK). An ATP-binding site is contributed by 65-72 (GENGAGKS).

It belongs to the ABC transporter superfamily. Carbohydrate importer 2 (CUT2) (TC 3.A.1.2) family.

The protein localises to the cell inner membrane. It catalyses the reaction D-ribose(out) + ATP + H2O = D-ribose(in) + ADP + phosphate + H(+). It carries out the reaction D-galactose(out) + ATP + H2O = D-galactose(in) + ADP + phosphate + H(+). Part of an ABC transporter complex involved in carbohydrate import. Could be involved in ribose, galactose and/or methyl galactoside import. Responsible for energy coupling to the transport system. In Pseudomonas savastanoi pv. phaseolicola (strain 1448A / Race 6) (Pseudomonas syringae pv. phaseolicola (strain 1448A / Race 6)), this protein is Putative ribose/galactose/methyl galactoside import ATP-binding protein.